Here is a 602-residue protein sequence, read N- to C-terminus: 4-hydroxy-3-methylbut-2-en-1-yl diphosphate synthase (flavodoxin) (602 aa).

[4Fe-4S] cluster is bound by residues cysteine 508, cysteine 511, cysteine 543, and glutamate 550.

The protein belongs to the IspG family. The cofactor is [4Fe-4S] cluster.

It catalyses the reaction (2E)-4-hydroxy-3-methylbut-2-enyl diphosphate + oxidized [flavodoxin] + H2O + 2 H(+) = 2-C-methyl-D-erythritol 2,4-cyclic diphosphate + reduced [flavodoxin]. It participates in isoprenoid biosynthesis; isopentenyl diphosphate biosynthesis via DXP pathway; isopentenyl diphosphate from 1-deoxy-D-xylulose 5-phosphate: step 5/6. Functionally, converts 2C-methyl-D-erythritol 2,4-cyclodiphosphate (ME-2,4cPP) into 1-hydroxy-2-methyl-2-(E)-butenyl 4-diphosphate. The protein is 4-hydroxy-3-methylbut-2-en-1-yl diphosphate synthase (flavodoxin) of Chlamydia trachomatis serovar D (strain ATCC VR-885 / DSM 19411 / UW-3/Cx).